The following is a 450-amino-acid chain: ATP-dependent protease ATPase subunit HslU (450 aa).

ATP contacts are provided by residues V29, 71-76 (GVGKTE), D261, E328, and R400.

The protein belongs to the ClpX chaperone family. HslU subfamily. A double ring-shaped homohexamer of HslV is capped on each side by a ring-shaped HslU homohexamer. The assembly of the HslU/HslV complex is dependent on binding of ATP.

The protein localises to the cytoplasm. Functionally, ATPase subunit of a proteasome-like degradation complex; this subunit has chaperone activity. The binding of ATP and its subsequent hydrolysis by HslU are essential for unfolding of protein substrates subsequently hydrolyzed by HslV. HslU recognizes the N-terminal part of its protein substrates and unfolds these before they are guided to HslV for hydrolysis. This chain is ATP-dependent protease ATPase subunit HslU, found in Rickettsia africae (strain ESF-5).